We begin with the raw amino-acid sequence, 148 residues long: Large ribosomal subunit protein bL9 (148 aa).

The protein belongs to the bacterial ribosomal protein bL9 family.

Functionally, binds to the 23S rRNA. This is Large ribosomal subunit protein bL9 from Hydrogenobaculum sp. (strain Y04AAS1).